The sequence spans 140 residues: Biopolymer transport protein exbD1 (140 aa).

Residues methionine 1 to asparagine 16 lie on the Cytoplasmic side of the membrane. A helical membrane pass occupies residues valine 17 to leucine 37. Topologically, residues methionine 38–glutamine 140 are periplasmic.

This sequence belongs to the ExbD/TolR family. The accessory proteins ExbB and ExbD seem to form a complex with TonB.

It localises to the cell inner membrane. Involved in the TonB-dependent energy-dependent transport of various receptor-bound substrates. The polypeptide is Biopolymer transport protein exbD1 (exbD1) (Xanthomonas campestris pv. campestris (strain B100)).